Here is a 375-residue protein sequence, read N- to C-terminus: 23S rRNA (uracil(747)-C(5))-methyltransferase RlmC (375 aa).

[4Fe-4S] cluster is bound by residues Cys3, Cys11, Cys14, and Cys87. S-adenosyl-L-methionine-binding residues include Gln212, Phe241, Glu262, and Asn307. Cys334 acts as the Nucleophile in catalysis.

It belongs to the class I-like SAM-binding methyltransferase superfamily. RNA M5U methyltransferase family. RlmC subfamily.

It catalyses the reaction uridine(747) in 23S rRNA + S-adenosyl-L-methionine = 5-methyluridine(747) in 23S rRNA + S-adenosyl-L-homocysteine + H(+). Its function is as follows. Catalyzes the formation of 5-methyl-uridine at position 747 (m5U747) in 23S rRNA. The polypeptide is 23S rRNA (uracil(747)-C(5))-methyltransferase RlmC (Escherichia coli O17:K52:H18 (strain UMN026 / ExPEC)).